The chain runs to 225 residues: Ribose-5-phosphate isomerase A (225 aa).

Substrate is bound by residues 33–36, 86–89, and 99–102; these read TGST, DGAD, and KGGG. Glu108 serves as the catalytic Proton acceptor. Lys126 is a substrate binding site.

It belongs to the ribose 5-phosphate isomerase family. In terms of assembly, homodimer.

It carries out the reaction aldehydo-D-ribose 5-phosphate = D-ribulose 5-phosphate. The protein operates within carbohydrate degradation; pentose phosphate pathway; D-ribose 5-phosphate from D-ribulose 5-phosphate (non-oxidative stage): step 1/1. Its function is as follows. Catalyzes the reversible conversion of ribose-5-phosphate to ribulose 5-phosphate. In Bordetella petrii (strain ATCC BAA-461 / DSM 12804 / CCUG 43448), this protein is Ribose-5-phosphate isomerase A.